The chain runs to 111 residues: Parvalbumin alpha (111 aa).

Thr1 carries the post-translational modification N-acetylthreonine; in form C2. EF-hand domains lie at 40 to 75 (KPDD…FAAG) and 79 to 111 (LTAN…VKAA). Positions 53, 55, 57, 59, 61, 64, 92, 94, 96, 98, and 103 each coordinate Ca(2+).

The protein belongs to the parvalbumin family. Acetylation of Thr-1 converts C1 to C2.

Its function is as follows. In muscle, parvalbumin is thought to be involved in relaxation after contraction. It binds two calcium ions. The sequence is that of Parvalbumin alpha from Latimeria chalumnae (Coelacanth).